The sequence spans 471 residues: Nuclear distribution protein PAC1 (471 aa).

The 33-residue stretch at 9-41 (QAEELHKSMIAYLLSVNLSKSAAALREELADSV) folds into the LisH domain. Positions 60–87 (TSVVRLQKKIMDLESRNAALQQELDSAT) form a coiled coil. Residues 83 to 93 (LDSATPTSLSR) show a composition bias toward polar residues. The disordered stretch occupies residues 83–108 (LDSATPTSLSRRNQDPASWLPRAPAR). WD repeat units follow at residues 113–154 (SHRG…RTIK), 156–196 (HTRA…KNIR), 200–247 (GHDH…CVKT), 250–289 (GHLD…TKST), 292–352 (GHEH…IKTL), 354–393 (GHDN…KCVR), 398–428 (AHGH…INGQ), and 429–467 (GTPS…MNVR). The tract at residues 424–449 (GINGQGTPSMNGVSISTTSKKEDTGG) is disordered. Polar residues predominate over residues 428–441 (QGTPSMNGVSISTT).

It belongs to the WD repeat LIS1/nudF family. As to quaternary structure, self-associates. Interacts with NDL1 and dynein.

It localises to the cytoplasm. Its subcellular location is the cytoskeleton. It is found in the spindle pole. In terms of biological role, positively regulates the activity of the minus-end directed microtubule motor protein dynein. May enhance dynein-mediated microtubule sliding by targeting dynein to the microtubule plus end. Required for nuclear migration during vegetative growth as well as development. Required for retrograde early endosome (EE) transport from the hyphal tip. Required for localization of dynein to the mitotic spindle poles. Recruits additional proteins to the dynein complex at SPBs. The protein is Nuclear distribution protein PAC1 of Coccidioides posadasii (strain C735) (Valley fever fungus).